Consider the following 380-residue polypeptide: Queuine tRNA-ribosyltransferase (380 aa).

Asp96 acts as the Proton acceptor in catalysis. Residues Asp96 to Phe100, Asp150, Gln193, and Gly220 each bind substrate. The interval Gly251–Ser257 is RNA binding. Asp270 (nucleophile) is an active-site residue. Positions Thr275–Arg279 are RNA binding; important for wobble base 34 recognition. Cys308, Cys310, Cys313, and His339 together coordinate Zn(2+).

Belongs to the queuine tRNA-ribosyltransferase family. In terms of assembly, homodimer. Within each dimer, one monomer is responsible for RNA recognition and catalysis, while the other monomer binds to the replacement base PreQ1. The cofactor is Zn(2+).

It carries out the reaction 7-aminomethyl-7-carbaguanine + guanosine(34) in tRNA = 7-aminomethyl-7-carbaguanosine(34) in tRNA + guanine. The protein operates within tRNA modification; tRNA-queuosine biosynthesis. Catalyzes the base-exchange of a guanine (G) residue with the queuine precursor 7-aminomethyl-7-deazaguanine (PreQ1) at position 34 (anticodon wobble position) in tRNAs with GU(N) anticodons (tRNA-Asp, -Asn, -His and -Tyr). Catalysis occurs through a double-displacement mechanism. The nucleophile active site attacks the C1' of nucleotide 34 to detach the guanine base from the RNA, forming a covalent enzyme-RNA intermediate. The proton acceptor active site deprotonates the incoming PreQ1, allowing a nucleophilic attack on the C1' of the ribose to form the product. After dissociation, two additional enzymatic reactions on the tRNA convert PreQ1 to queuine (Q), resulting in the hypermodified nucleoside queuosine (7-(((4,5-cis-dihydroxy-2-cyclopenten-1-yl)amino)methyl)-7-deazaguanosine). This chain is Queuine tRNA-ribosyltransferase, found in Streptococcus pyogenes serotype M49 (strain NZ131).